A 460-amino-acid polypeptide reads, in one-letter code: G2/mitotic-specific cyclin-4 (460 aa).

This sequence belongs to the cyclin family. Cyclin AB subfamily.

Essential for the control of the cell cycle at the G2/M (mitosis) transition. Interacts with the CDC2 protein kinase to form MPF. G2/M cyclins accumulate steadily during G2 and are abruptly destroyed at mitosis. The protein is G2/mitotic-specific cyclin-4 (CLB4) of Saccharomyces cerevisiae (strain ATCC 204508 / S288c) (Baker's yeast).